We begin with the raw amino-acid sequence, 213 residues long: uncharacterized protein (213 aa).

The segment covering 1–11 (MFATKDPEFEN) has biased composition (basic and acidic residues). Disordered stretches follow at residues 1 to 21 (MFAT…SPRN) and 63 to 98 (LRNK…EQAW). Over residues 12–21 (RINTNKSPRN) the composition is skewed to polar residues. The segment covering 63-93 (LRNKAPKNEETKHEEHTPDNHEETDHHEAKQ) has biased composition (basic and acidic residues).

This is an uncharacterized protein from Escherichia coli (strain K12).